A 169-amino-acid polypeptide reads, in one-letter code: Benzoate 1,2-dioxygenase subunit beta (169 aa).

It belongs to the bacterial ring-hydroxylating dioxygenase beta subunit family. In terms of assembly, this dioxygenase system consists of three proteins: the two subunits of the hydroxylase (BenA and BenB), and an electron transfer component (BenC).

The catalysed reaction is benzoate + NADH + O2 + H(+) = (1R,6S)-1,6-dihydroxycyclohexa-2,4-diene-1-carboxylate + NAD(+). Its pathway is aromatic compound metabolism; benzoate degradation via hydroxylation; catechol from benzoate: step 1/2. In terms of biological role, degradation of benzoate to 2-hydro-1,2-dihydroxybenzoate (DHB). The beta subunit may be responsible for the substrate specificity of the enzyme. The protein is Benzoate 1,2-dioxygenase subunit beta (benB) of Acinetobacter baylyi (strain ATCC 33305 / BD413 / ADP1).